The sequence spans 466 residues: Phosphomethylpyrimidine synthase (466 aa).

Substrate is bound by residues asparagine 80, methionine 109, tyrosine 139, histidine 175, 195–197 (SRG), 236–239 (DSLR), and glutamate 275. Histidine 279 is a Zn(2+) binding site. Tyrosine 302 lines the substrate pocket. Residue histidine 343 participates in Zn(2+) binding. Positions 423, 426, and 431 each coordinate [4Fe-4S] cluster.

Belongs to the ThiC family. Requires [4Fe-4S] cluster as cofactor.

The enzyme catalyses 5-amino-1-(5-phospho-beta-D-ribosyl)imidazole + S-adenosyl-L-methionine = 4-amino-2-methyl-5-(phosphooxymethyl)pyrimidine + CO + 5'-deoxyadenosine + formate + L-methionine + 3 H(+). Its pathway is cofactor biosynthesis; thiamine diphosphate biosynthesis. Its function is as follows. Catalyzes the synthesis of the hydroxymethylpyrimidine phosphate (HMP-P) moiety of thiamine from aminoimidazole ribotide (AIR) in a radical S-adenosyl-L-methionine (SAM)-dependent reaction. In Synechococcus sp. (strain CC9902), this protein is Phosphomethylpyrimidine synthase.